A 188-amino-acid chain; its full sequence is Segregation and condensation protein B (188 aa).

The protein belongs to the ScpB family. Homodimer. Homodimerization may be required to stabilize the binding of ScpA to the Smc head domains. Component of a cohesin-like complex composed of ScpA, ScpB and the Smc homodimer, in which ScpA and ScpB bind to the head domain of Smc. The presence of the three proteins is required for the association of the complex with DNA.

It localises to the cytoplasm. In terms of biological role, participates in chromosomal partition during cell division. May act via the formation of a condensin-like complex containing Smc and ScpA that pull DNA away from mid-cell into both cell halves. The protein is Segregation and condensation protein B of Lactococcus lactis subsp. lactis (strain IL1403) (Streptococcus lactis).